Reading from the N-terminus, the 178-residue chain is Ribosome maturation factor RimP (178 aa).

The protein belongs to the RimP family.

It is found in the cytoplasm. Functionally, required for maturation of 30S ribosomal subunits. The sequence is that of Ribosome maturation factor RimP from Corynebacterium glutamicum (strain ATCC 13032 / DSM 20300 / JCM 1318 / BCRC 11384 / CCUG 27702 / LMG 3730 / NBRC 12168 / NCIMB 10025 / NRRL B-2784 / 534).